The primary structure comprises 311 residues: Ribosomal protein L11 methyltransferase (311 aa).

The S-adenosyl-L-methionine site is built by Thr-160, Gly-181, Asp-203, and Asn-246.

Belongs to the methyltransferase superfamily. PrmA family.

Its subcellular location is the cytoplasm. The catalysed reaction is L-lysyl-[protein] + 3 S-adenosyl-L-methionine = N(6),N(6),N(6)-trimethyl-L-lysyl-[protein] + 3 S-adenosyl-L-homocysteine + 3 H(+). Methylates ribosomal protein L11. The sequence is that of Ribosomal protein L11 methyltransferase from Macrococcus caseolyticus (strain JCSC5402) (Macrococcoides caseolyticum).